Reading from the N-terminus, the 621-residue chain is Chaperone protein HtpG (621 aa).

An a; substrate-binding region spans residues 1–328; it reads MKQEKKKFDA…SEDLPLNISR (328 aa). The segment at 329 to 544 is b; that stretch reads ESLQHNNVLE…EAAMDIRMER (216 aa). Positions 479–498 are disordered; sequence VDQATSSSEEKNKDDKKSDD. Basic and acidic residues predominate over residues 486 to 498; the sequence is SEEKNKDDKKSDD. Residues 545 to 621 are c; the sequence is FLIEQKQIAN…LNDIVQKAIL (77 aa).

It belongs to the heat shock protein 90 family. Homodimer.

It is found in the cytoplasm. In terms of biological role, molecular chaperone. Has ATPase activity. The polypeptide is Chaperone protein HtpG (Rickettsia bellii (strain OSU 85-389)).